A 309-amino-acid polypeptide reads, in one-letter code: Heme A synthase (309 aa).

Residues 1-6 lie on the Cytoplasmic side of the membrane; the sequence is MTKKLK. A helical transmembrane segment spans residues 7–27; that stretch reads ILSVISTICMIPLLLGGALVT. Residues 28-62 lie on the Extracellular side of the membrane; sequence KTGSADGCGNSWPLCEGQFLPTKISFEMFIELSHR. Cys35 and Cys42 are oxidised to a cystine. Glu58 is a catalytic residue. His61 is a heme o binding site. A helical transmembrane segment spans residues 63–83; sequence GVTGVVGILIVYLTYLVWKEL. The Cytoplasmic portion of the chain corresponds to 84–88; sequence RHNKE. Residues 89-109 form a helical membrane-spanning segment; that stretch reads VVFLAFSALSLMILQALIGAA. At 110–123 the chain is on the extracellular side; sequence AVVWGQSDFALATH. His123 contributes to the heme o binding site. The chain crosses the membrane as a helical span at residues 124–144; that stretch reads FGISLVCFAAVFLLMLQLFEI. Residues 145–159 are Cytoplasmic-facing; that stretch reads DKKLHTEDIHINKTH. The chain crosses the membrane as a helical span at residues 160-180; it reads RIEIYAISFYTMCVVYSGALV. At 181–211 the chain is on the extracellular side; the sequence is RHTDSNLACRDWPLCVNNSSFGISDYNFYQW. A disulfide bridge connects residues Cys189 and Cys195. A helical transmembrane segment spans residues 212–232; it reads VQMGHRLAAGILFIWTVILTI. His216 provides a ligand contact to heme b. The Cytoplasmic segment spans residues 233-247; the sequence is RMVKHYKNSKVFYWS. Residues 248-268 traverse the membrane as a helical segment; sequence WLITLGLITLQVLFGALIIFT. Residues 269–271 are Extracellular-facing; the sequence is SLN. A helical transmembrane segment spans residues 272–292; the sequence is LAIALFHALFITCYFGMLSFF. A heme b-binding site is contributed by His278. Residues 293-309 are Cytoplasmic-facing; that stretch reads MHLSFRAKRREKYSNQS.

The protein belongs to the COX15/CtaA family. Type 1 subfamily. As to quaternary structure, interacts with CtaB. Heme b is required as a cofactor.

Its subcellular location is the cell membrane. The enzyme catalyses Fe(II)-heme o + 2 A + H2O = Fe(II)-heme a + 2 AH2. Its pathway is porphyrin-containing compound metabolism; heme A biosynthesis; heme A from heme O: step 1/1. Functionally, catalyzes the conversion of heme O to heme A by two successive hydroxylations of the methyl group at C8. The first hydroxylation forms heme I, the second hydroxylation results in an unstable dihydroxymethyl group, which spontaneously dehydrates, resulting in the formyl group of heme A. The chain is Heme A synthase from Oceanobacillus iheyensis (strain DSM 14371 / CIP 107618 / JCM 11309 / KCTC 3954 / HTE831).